A 519-amino-acid polypeptide reads, in one-letter code: T-box transcription factor TBX5 (519 aa).

Residues 1–43 are disordered; that stretch reads MADTEEAYGMPDTPVEAEPKELQCEPKQDNQMGASSKTPTSPQ. A compositionally biased stretch (basic and acidic residues) spans 17–28; sequence AEPKELQCEPKQ. Polar residues predominate over residues 29–43; sequence DNQMGASSKTPTSPQ. The segment at residues 63 to 238 is a DNA-binding region (T-box); that stretch reads LWLKFHEVGT…NNPFAKGFRG (176 aa). 2 disordered regions span residues 254–312 and 335–376; these read EYPV…SAYP and ELSY…TESA. Positions 262–303 are enriched in polar residues; the sequence is TVRQKVSSNHSPFSQETRNITGSSTLNSQYQCENGVSSTSQD.

As to quaternary structure, monomer. Homodimer (via the T-box); binds DNA as homodimer.

The protein localises to the nucleus. It localises to the cytoplasm. Functionally, DNA-binding protein that regulates the transcription of several genes and is involved in heart development and limb pattern formation. May bind to the core DNA motif of promoters. This Xenopus tropicalis (Western clawed frog) protein is T-box transcription factor TBX5 (tbx5).